A 200-amino-acid chain; its full sequence is Probable GTP-binding protein EngB (200 aa).

Residues 30-199 (KKAEVAIAGR…EDYIYENWIK (170 aa)) enclose the EngB-type G domain. GTP contacts are provided by residues 38 to 45 (GRSNAGKS), 64 to 68 (GKTRL), 82 to 85 (DMPG), 149 to 152 (TKAD), and 178 to 180 (VSA). S45 and T66 together coordinate Mg(2+).

Belongs to the TRAFAC class TrmE-Era-EngA-EngB-Septin-like GTPase superfamily. EngB GTPase family. Mg(2+) serves as cofactor.

Necessary for normal cell division and for the maintenance of normal septation. The protein is Probable GTP-binding protein EngB of Bdellovibrio bacteriovorus (strain ATCC 15356 / DSM 50701 / NCIMB 9529 / HD100).